The sequence spans 549 residues: Coiled-coil domain-containing protein 102A (549 aa).

3 disordered regions span residues 1 to 61 (MSHG…TAPA), 135 to 195 (LAGA…GSQE), and 207 to 248 (PEEP…EEDA). Residues serine 12, serine 26, and serine 28 each carry the phosphoserine modification. Residues 37–55 (SLPPTPPSGTPSPGPPPSL) are compositionally biased toward pro residues. Residues 69–160 (ESREELRLRE…ARGRELARLR (92 aa)) are a coiled coil. 2 stretches are compositionally biased toward basic and acidic residues: residues 135–158 (LAGA…ELAR) and 165–187 (AADK…DIGA). Coiled coils occupy residues 263–398 (KVLL…NASA) and 426–517 (KLKK…NAPL). Disordered stretches follow at residues 472–496 (ELDE…QSEN) and 509–549 (RRQQ…IQVA). A compositionally biased stretch (acidic residues) spans 530–549 (EAGDGASDLDEDEDLQIQVA). Serine 536 bears the Phosphoserine mark.

The chain is Coiled-coil domain-containing protein 102A (Ccdc102a) from Mus musculus (Mouse).